Consider the following 116-residue polypeptide: Large ribosomal subunit protein bL17 (116 aa).

Belongs to the bacterial ribosomal protein bL17 family. Part of the 50S ribosomal subunit. Contacts protein L32.

In Prochlorococcus marinus (strain MIT 9303), this protein is Large ribosomal subunit protein bL17.